Reading from the N-terminus, the 138-residue chain is Transcription antitermination protein NusB (138 aa).

It belongs to the NusB family.

Involved in transcription antitermination. Required for transcription of ribosomal RNA (rRNA) genes. Binds specifically to the boxA antiterminator sequence of the ribosomal RNA (rrn) operons. This chain is Transcription antitermination protein NusB, found in Yersinia pseudotuberculosis serotype O:1b (strain IP 31758).